Consider the following 191-residue polypeptide: 3-isopropylmalate dehydratase small subunit (191 aa).

This sequence belongs to the LeuD family. LeuD type 1 subfamily. As to quaternary structure, heterodimer of LeuC and LeuD.

The catalysed reaction is (2R,3S)-3-isopropylmalate = (2S)-2-isopropylmalate. It participates in amino-acid biosynthesis; L-leucine biosynthesis; L-leucine from 3-methyl-2-oxobutanoate: step 2/4. Its function is as follows. Catalyzes the isomerization between 2-isopropylmalate and 3-isopropylmalate, via the formation of 2-isopropylmaleate. This is 3-isopropylmalate dehydratase small subunit from Anaeromyxobacter sp. (strain K).